The chain runs to 396 residues: 8-amino-7-oxononanoate synthase (396 aa).

Arginine 19 is a binding site for substrate. Residue 106 to 107 (GY) participates in pyridoxal 5'-phosphate binding. A substrate-binding site is contributed by histidine 131. Pyridoxal 5'-phosphate is bound by residues serine 176, histidine 204, and threonine 233. At lysine 236 the chain carries N6-(pyridoxal phosphate)lysine. Threonine 350 lines the substrate pocket.

It belongs to the class-II pyridoxal-phosphate-dependent aminotransferase family. BioF subfamily. Homodimer. It depends on pyridoxal 5'-phosphate as a cofactor.

The enzyme catalyses 6-carboxyhexanoyl-[ACP] + L-alanine + H(+) = (8S)-8-amino-7-oxononanoate + holo-[ACP] + CO2. It participates in cofactor biosynthesis; biotin biosynthesis. In terms of biological role, catalyzes the decarboxylative condensation of pimeloyl-[acyl-carrier protein] and L-alanine to produce 8-amino-7-oxononanoate (AON), [acyl-carrier protein], and carbon dioxide. This chain is 8-amino-7-oxononanoate synthase, found in Pseudomonas syringae pv. tomato (strain ATCC BAA-871 / DC3000).